A 98-amino-acid polypeptide reads, in one-letter code: DNA-binding protein Fis (98 aa).

The H-T-H motif DNA-binding region spans glutamine 74–lysine 93.

The protein belongs to the transcriptional regulatory Fis family. Homodimer.

Its function is as follows. Activates ribosomal RNA transcription. Plays a direct role in upstream activation of rRNA promoters. The sequence is that of DNA-binding protein Fis from Sodalis glossinidius (strain morsitans).